The primary structure comprises 452 residues: UPF0210 protein Cthe_0410 (452 aa).

It belongs to the UPF0210 family. In terms of assembly, homodimer.

The sequence is that of UPF0210 protein Cthe_0410 from Acetivibrio thermocellus (strain ATCC 27405 / DSM 1237 / JCM 9322 / NBRC 103400 / NCIMB 10682 / NRRL B-4536 / VPI 7372) (Clostridium thermocellum).